A 44-amino-acid chain; its full sequence is Antibacterial protein 3 homolog (44 aa).

Belongs to the staphylococcal hemolytic protein family.

The protein resides in the secreted. Functionally, has hemolytic activity and also inhibits the growth of gonococci. This is Antibacterial protein 3 homolog from Staphylococcus haemolyticus (strain JCSC1435).